The chain runs to 301 residues: Ribonuclease Z (301 aa).

Zn(2+) is bound by residues H61, H63, D65, H66, H140, D211, and H269. The Proton acceptor role is filled by D65.

It belongs to the RNase Z family. Homodimer. It depends on Zn(2+) as a cofactor.

It catalyses the reaction Endonucleolytic cleavage of RNA, removing extra 3' nucleotides from tRNA precursor, generating 3' termini of tRNAs. A 3'-hydroxy group is left at the tRNA terminus and a 5'-phosphoryl group is left at the trailer molecule.. Its function is as follows. Zinc phosphodiesterase, which displays some tRNA 3'-processing endonuclease activity. Probably involved in tRNA maturation, by removing a 3'-trailer from precursor tRNA. The protein is Ribonuclease Z of Bradyrhizobium sp. (strain ORS 278).